We begin with the raw amino-acid sequence, 673 residues long: UvrABC system protein B (673 aa).

The region spanning 25 to 413 (EGIESGLAHQ…GSDIAEQVVR (389 aa)) is the Helicase ATP-binding domain. 38–45 (GVTGSGKT) provides a ligand contact to ATP. The Beta-hairpin signature appears at 91–114 (YYDYYQPEAYVPTTDTFIEKDASV). One can recognise a Helicase C-terminal domain in the interval 430–583 (QVDDLLSEIN…QHQYNLDNNI (154 aa)). The region spanning 634-669 (DTKIVELEKLMQGHAQNLEFEQAAAMRDKIAKLRIQ) is the UVR domain.

Belongs to the UvrB family. As to quaternary structure, forms a heterotetramer with UvrA during the search for lesions. Interacts with UvrC in an incision complex.

It localises to the cytoplasm. Functionally, the UvrABC repair system catalyzes the recognition and processing of DNA lesions. A damage recognition complex composed of 2 UvrA and 2 UvrB subunits scans DNA for abnormalities. Upon binding of the UvrA(2)B(2) complex to a putative damaged site, the DNA wraps around one UvrB monomer. DNA wrap is dependent on ATP binding by UvrB and probably causes local melting of the DNA helix, facilitating insertion of UvrB beta-hairpin between the DNA strands. Then UvrB probes one DNA strand for the presence of a lesion. If a lesion is found the UvrA subunits dissociate and the UvrB-DNA preincision complex is formed. This complex is subsequently bound by UvrC and the second UvrB is released. If no lesion is found, the DNA wraps around the other UvrB subunit that will check the other stand for damage. This chain is UvrABC system protein B, found in Colwellia psychrerythraea (strain 34H / ATCC BAA-681) (Vibrio psychroerythus).